A 568-amino-acid polypeptide reads, in one-letter code: Probable inactive 1-aminocyclopropane-1-carboxylate synthase-like protein 2 (568 aa).

Residues 1–21 form a disordered region; the sequence is MSHRSDTLPVPSGQRRGRVPR. Position 395 is an N6-(pyridoxal phosphate)lysine (Lys-395).

The protein belongs to the class-I pyridoxal-phosphate-dependent aminotransferase family.

The sequence is that of Probable inactive 1-aminocyclopropane-1-carboxylate synthase-like protein 2 (ACCSL) from Homo sapiens (Human).